The primary structure comprises 365 residues: UDP-N-acetylglucosamine--N-acetylmuramyl-(pentapeptide) pyrophosphoryl-undecaprenol N-acetylglucosamine transferase (365 aa).

UDP-N-acetyl-alpha-D-glucosamine is bound by residues 17 to 19 (TGG), N129, R167, S194, I250, 269 to 274 (ALTVSE), and Q295.

The protein belongs to the glycosyltransferase 28 family. MurG subfamily.

The protein resides in the cell inner membrane. It carries out the reaction di-trans,octa-cis-undecaprenyl diphospho-N-acetyl-alpha-D-muramoyl-L-alanyl-D-glutamyl-meso-2,6-diaminopimeloyl-D-alanyl-D-alanine + UDP-N-acetyl-alpha-D-glucosamine = di-trans,octa-cis-undecaprenyl diphospho-[N-acetyl-alpha-D-glucosaminyl-(1-&gt;4)]-N-acetyl-alpha-D-muramoyl-L-alanyl-D-glutamyl-meso-2,6-diaminopimeloyl-D-alanyl-D-alanine + UDP + H(+). The protein operates within cell wall biogenesis; peptidoglycan biosynthesis. Functionally, cell wall formation. Catalyzes the transfer of a GlcNAc subunit on undecaprenyl-pyrophosphoryl-MurNAc-pentapeptide (lipid intermediate I) to form undecaprenyl-pyrophosphoryl-MurNAc-(pentapeptide)GlcNAc (lipid intermediate II). The chain is UDP-N-acetylglucosamine--N-acetylmuramyl-(pentapeptide) pyrophosphoryl-undecaprenol N-acetylglucosamine transferase from Shewanella halifaxensis (strain HAW-EB4).